Reading from the N-terminus, the 317-residue chain is Beta-ketoacyl-[acyl-carrier-protein] synthase III (317 aa).

Active-site residues include Cys-112 and His-244. The interval Gln-245–Arg-249 is ACP-binding. Residue Asn-274 is part of the active site.

It belongs to the thiolase-like superfamily. FabH family. Homodimer.

The protein resides in the cytoplasm. The enzyme catalyses malonyl-[ACP] + acetyl-CoA + H(+) = 3-oxobutanoyl-[ACP] + CO2 + CoA. The protein operates within lipid metabolism; fatty acid biosynthesis. Catalyzes the condensation reaction of fatty acid synthesis by the addition to an acyl acceptor of two carbons from malonyl-ACP. Catalyzes the first condensation reaction which initiates fatty acid synthesis and may therefore play a role in governing the total rate of fatty acid production. Possesses both acetoacetyl-ACP synthase and acetyl transacylase activities. Its substrate specificity determines the biosynthesis of branched-chain and/or straight-chain of fatty acids. This chain is Beta-ketoacyl-[acyl-carrier-protein] synthase III, found in Salmonella paratyphi A (strain ATCC 9150 / SARB42).